The following is a 188-amino-acid chain: MAAKLIVGLGNPGPKYSWTRHNAGFMVLDRLASLSGIQVTRKAFSGLSGDGNWSSERVYLLKPQTFMNLSGRSVAEALRFYKLSLSDLIVIHDDLDIPFGKVKLKEGGGHGGHNGLRSLAQELGSSAYARIRVGIGRPVHGDVVNFVLTNFAKEEMDSLLEVLDTSVDALEMMIKEGMPKAMSIFNAR.

Residue Tyr-16 participates in tRNA binding. His-21 functions as the Proton acceptor in the catalytic mechanism. TRNA-binding residues include Phe-66, Asn-68, and Asn-114.

This sequence belongs to the PTH family. Monomer.

The protein localises to the cytoplasm. The catalysed reaction is an N-acyl-L-alpha-aminoacyl-tRNA + H2O = an N-acyl-L-amino acid + a tRNA + H(+). In terms of biological role, hydrolyzes ribosome-free peptidyl-tRNAs (with 1 or more amino acids incorporated), which drop off the ribosome during protein synthesis, or as a result of ribosome stalling. Functionally, catalyzes the release of premature peptidyl moieties from peptidyl-tRNA molecules trapped in stalled 50S ribosomal subunits, and thus maintains levels of free tRNAs and 50S ribosomes. This is Peptidyl-tRNA hydrolase from Citrifermentans bemidjiense (strain ATCC BAA-1014 / DSM 16622 / JCM 12645 / Bem) (Geobacter bemidjiensis).